A 286-amino-acid chain; its full sequence is Pyridoxal kinase PdxY (286 aa).

Substrate-binding positions include serine 9 and 44–45; that span reads TQ. Residues aspartate 111, alanine 143, glutamate 148, lysine 181, and 208–211 each bind ATP; that span reads RPLV. Aspartate 223 provides a ligand contact to substrate.

The protein belongs to the pyridoxine kinase family. PdxY subfamily. As to quaternary structure, homodimer. Mg(2+) is required as a cofactor.

The catalysed reaction is pyridoxal + ATP = pyridoxal 5'-phosphate + ADP + H(+). The protein operates within cofactor metabolism; pyridoxal 5'-phosphate salvage; pyridoxal 5'-phosphate from pyridoxal: step 1/1. Pyridoxal kinase involved in the salvage pathway of pyridoxal 5'-phosphate (PLP). Catalyzes the phosphorylation of pyridoxal to PLP. This is Pyridoxal kinase PdxY from Salmonella choleraesuis (strain SC-B67).